The following is a 367-amino-acid chain: 2-aminoethylphosphonate--pyruvate transaminase (367 aa).

Lys-194 carries the N6-(pyridoxal phosphate)lysine modification.

It belongs to the class-V pyridoxal-phosphate-dependent aminotransferase family. PhnW subfamily. In terms of assembly, homodimer. Requires pyridoxal 5'-phosphate as cofactor.

The enzyme catalyses (2-aminoethyl)phosphonate + pyruvate = phosphonoacetaldehyde + L-alanine. In terms of biological role, involved in phosphonate degradation. The polypeptide is 2-aminoethylphosphonate--pyruvate transaminase (Salmonella choleraesuis (strain SC-B67)).